The chain runs to 688 residues: Glycine--tRNA ligase beta subunit (688 aa).

Belongs to the class-II aminoacyl-tRNA synthetase family. As to quaternary structure, tetramer of two alpha and two beta subunits.

It localises to the cytoplasm. It carries out the reaction tRNA(Gly) + glycine + ATP = glycyl-tRNA(Gly) + AMP + diphosphate. The protein is Glycine--tRNA ligase beta subunit of Histophilus somni (strain 129Pt) (Haemophilus somnus).